We begin with the raw amino-acid sequence, 327 residues long: Biotin synthase (327 aa).

In terms of domain architecture, Radical SAM core spans 42–268; it reads NKVQKASLLS…VMPASTVRLS (227 aa). The [4Fe-4S] cluster site is built by Cys-57, Cys-61, and Cys-64. 4 residues coordinate [2Fe-2S] cluster: Cys-102, Cys-134, Cys-194, and Arg-266.

The protein belongs to the radical SAM superfamily. Biotin synthase family. As to quaternary structure, homodimer. [4Fe-4S] cluster serves as cofactor. Requires [2Fe-2S] cluster as cofactor.

It catalyses the reaction (4R,5S)-dethiobiotin + (sulfur carrier)-SH + 2 reduced [2Fe-2S]-[ferredoxin] + 2 S-adenosyl-L-methionine = (sulfur carrier)-H + biotin + 2 5'-deoxyadenosine + 2 L-methionine + 2 oxidized [2Fe-2S]-[ferredoxin]. Its pathway is cofactor biosynthesis; biotin biosynthesis; biotin from 7,8-diaminononanoate: step 2/2. Its function is as follows. Catalyzes the conversion of dethiobiotin (DTB) to biotin by the insertion of a sulfur atom into dethiobiotin via a radical-based mechanism. This Rhizobium rhizogenes (strain K84 / ATCC BAA-868) (Agrobacterium radiobacter) protein is Biotin synthase.